Consider the following 301-residue polypeptide: Asialoglycoprotein receptor 2 (301 aa).

A disordered region spans residues 1–29; that stretch reads MEKDFQDIQQLDSEENDHQLIGDEEQGSH. The Cytoplasmic segment spans residues 1-58; that stretch reads MEKDFQDIQQLDSEENDHQLIGDEEQGSHVQNLRTENPRWGGQPPSRPFPQRLCSKFR. A Phosphoserine modification is found at serine 13. Cysteine 54 carries the S-palmitoyl cysteine lipid modification. Residues 59 to 79 form a helical; Signal-anchor for type II membrane protein membrane-spanning segment; sequence LSLLALAFNILLLVVICVVSS. Residues 80–301 lie on the Extracellular side of the membrane; sequence QSMQLQKEFW…ACERKRDITY (222 aa). N-linked (GlcNAc...) asparagine glycosylation is found at asparagine 97, asparagine 119, and asparagine 165. Residues 169-295 form the C-type lectin domain; sequence CCPVNWVEFG…QQVNRWACER (127 aa). Disulfide bonds link cysteine 170–cysteine 181, cysteine 198–cysteine 293, and cysteine 271–cysteine 285.

In terms of assembly, interacts with LASS2. As to expression, expressed exclusively in hepatic parenchymal cells.

The protein localises to the membrane. Mediates the endocytosis of plasma glycoproteins to which the terminal sialic acid residue on their complex carbohydrate moieties has been removed. The receptor recognizes terminal galactose and N-acetylgalactosamine units. After ligand binding to the receptor, the resulting complex is internalized and transported to a sorting organelle, where receptor and ligand are disassociated. The receptor then returns to the cell membrane surface. This is Asialoglycoprotein receptor 2 (Asgr2) from Rattus norvegicus (Rat).